Reading from the N-terminus, the 230-residue chain is Ribonuclease HII (230 aa).

The RNase H type-2 domain occupies 1–224 (MIIIGIDEAG…CKRILDKSKQ (224 aa)). Residues Asp7, Glu8, and Asp112 each coordinate a divalent metal cation.

It belongs to the RNase HII family. Mn(2+) is required as a cofactor. Mg(2+) serves as cofactor.

The protein localises to the cytoplasm. The enzyme catalyses Endonucleolytic cleavage to 5'-phosphomonoester.. In terms of biological role, endonuclease that specifically degrades the RNA of RNA-DNA hybrids. In Methanocaldococcus jannaschii (strain ATCC 43067 / DSM 2661 / JAL-1 / JCM 10045 / NBRC 100440) (Methanococcus jannaschii), this protein is Ribonuclease HII (rnhB).